The sequence spans 303 residues: Quinolinate synthase (303 aa).

2 residues coordinate iminosuccinate: H24 and S41. C86 lines the [4Fe-4S] cluster pocket. Iminosuccinate-binding positions include 112-114 (YVN) and S129. C172 lines the [4Fe-4S] cluster pocket. Residues 198 to 200 (HPE) and T215 contribute to the iminosuccinate site. C260 serves as a coordination point for [4Fe-4S] cluster.

Belongs to the quinolinate synthase family. Type 2 subfamily. The cofactor is [4Fe-4S] cluster.

It is found in the cytoplasm. It catalyses the reaction iminosuccinate + dihydroxyacetone phosphate = quinolinate + phosphate + 2 H2O + H(+). It functions in the pathway cofactor biosynthesis; NAD(+) biosynthesis; quinolinate from iminoaspartate: step 1/1. Catalyzes the condensation of iminoaspartate with dihydroxyacetone phosphate to form quinolinate. In Alkaliphilus metalliredigens (strain QYMF), this protein is Quinolinate synthase.